We begin with the raw amino-acid sequence, 285 residues long: 2-dehydro-3-deoxyphosphooctonate aldolase (285 aa).

The protein belongs to the KdsA family.

Its subcellular location is the cytoplasm. The enzyme catalyses D-arabinose 5-phosphate + phosphoenolpyruvate + H2O = 3-deoxy-alpha-D-manno-2-octulosonate-8-phosphate + phosphate. It participates in carbohydrate biosynthesis; 3-deoxy-D-manno-octulosonate biosynthesis; 3-deoxy-D-manno-octulosonate from D-ribulose 5-phosphate: step 2/3. It functions in the pathway bacterial outer membrane biogenesis; lipopolysaccharide biosynthesis. The sequence is that of 2-dehydro-3-deoxyphosphooctonate aldolase from Albidiferax ferrireducens (strain ATCC BAA-621 / DSM 15236 / T118) (Rhodoferax ferrireducens).